A 205-amino-acid polypeptide reads, in one-letter code: Protein N-terminal glutamine amidohydrolase (205 aa).

Catalysis depends on residues cysteine 20, histidine 74, and aspartate 90.

It belongs to the NTAQ1 family. As to quaternary structure, monomer.

The catalysed reaction is N-terminal L-glutaminyl-[protein] + H2O = N-terminal L-glutamyl-[protein] + NH4(+). Functionally, mediates the side-chain deamidation of N-terminal glutamine residues to glutamate, an important step in N-end rule pathway of protein degradation. Conversion of the resulting N-terminal glutamine to glutamate renders the protein susceptible to arginylation, polyubiquitination and degradation as specified by the N-end rule. Does not act on substrates with internal or C-terminal glutamine and does not act on non-glutamine residues in any position. This Drosophila mojavensis (Fruit fly) protein is Protein N-terminal glutamine amidohydrolase (tun).